The following is a 188-amino-acid chain: Protein SSX3 (188 aa).

One can recognise a KRAB-related domain in the interval 20–83; the sequence is KIQKAFDDIA…KRVTDFQGND (64 aa). Residues 113–162 are disordered; sequence PKKPAEEGNVSKEVPEASGPQNDGKQLCPPGKPTTSEKINMISGPKRGEH. Positions 115–127 are enriched in basic and acidic residues; sequence KPAEEGNVSKEVP. Serine 123 bears the Phosphoserine mark.

This sequence belongs to the SSX family. Interacts with SSX2IP.

Functionally, could act as a modulator of transcription. The polypeptide is Protein SSX3 (SSX3) (Homo sapiens (Human)).